The chain runs to 432 residues: Nematocyst expressed protein 3-like (432 aa).

The N-terminal stretch at 1 to 19 (MRVVYLVLVVAVIIAITEA) is a signal peptide. Cystine bridges form between C52–C91, C59–C84, C73–C88, C125–C140, C157–C176, and C166–C180. ShKT domains lie at 59–91 (CKAFGKIAKKDKKSCFNNPDKARMACPVSCKLC), 107–143 (VVRAMCVDIEVDQCNPDVCYTNPDWATENCRKTCMLC), and 149–183 (GPCDTDPRCPFWGQYGYCSTATYIDNHCPYNCDVY). The segment covering 235–313 (GAQYPAATAA…PEAAPSEPEA (79 aa)) has biased composition (low complexity). Residues 235–432 (GAQYPAATAA…KSKSGHKRHH (198 aa)) are disordered. The span at 314 to 330 (APAPAPEMAPAPAPEMA) shows a compositional bias: pro residues. A compositionally biased stretch (low complexity) spans 331-408 (PAPEAASAPA…AAPSEQPMPG (78 aa)). Residues 409 to 432 (KKSKSKPSKRKGVKKSKSGHKRHH) show a composition bias toward basic residues.

The protein belongs to the NEP3 family. Nematocytes. In late planulae, transcripts are found throughout the ectoderm in nematocytes, with high concentration of expressing cells in the oral pole. In primary polyps, is expressed in nematocytes in the body wall and physa ectoderm and in the upper and lower pharynx.

Its subcellular location is the nematocyst. The protein resides in the secreted. Its function is as follows. Probable toxin. The protein is Nematocyst expressed protein 3-like of Nematostella vectensis (Starlet sea anemone).